A 182-amino-acid polypeptide reads, in one-letter code: Protein Syd (182 aa).

Belongs to the Syd family.

The protein localises to the cell inner membrane. Its function is as follows. Interacts with the SecY protein in vivo. May bind preferentially to an uncomplexed state of SecY, thus functioning either as a chelating agent for excess SecY in the cell or as a regulatory factor that negatively controls the translocase function. In Aeromonas salmonicida (strain A449), this protein is Protein Syd.